The primary structure comprises 806 residues: Hyperosmolality-gated Ca2+ permeable channel 1.8 (806 aa).

10 helical membrane passes run Ile7–Val27, Ile102–Val122, Lys157–Tyr177, Leu375–Val395, Phe427–Met447, Tyr467–Glu487, Ala512–Leu532, Phe576–Phe596, Val626–Ala646, and Ala650–Tyr670. Positions Ser726–Ser786 are disordered. The span at Ser731–Thr750 shows a compositional bias: basic and acidic residues. Thr735 carries the post-translational modification Phosphothreonine. Residues Gln751–Ser762 show a composition bias toward polar residues. Over residues Ser775–Ser786 the composition is skewed to low complexity.

It belongs to the CSC1 (TC 1.A.17) family.

It is found in the golgi apparatus membrane. Its subcellular location is the cell membrane. Acts as an osmosensitive calcium-permeable cation channel. In Arabidopsis thaliana (Mouse-ear cress), this protein is Hyperosmolality-gated Ca2+ permeable channel 1.8.